An 862-amino-acid chain; its full sequence is DNA mismatch repair protein MutS (862 aa).

621–628 (GPNMGGKS) is an ATP binding site.

Belongs to the DNA mismatch repair MutS family.

This protein is involved in the repair of mismatches in DNA. It is possible that it carries out the mismatch recognition step. This protein has a weak ATPase activity. This is DNA mismatch repair protein MutS from Vibrio cholerae serotype O1 (strain ATCC 39541 / Classical Ogawa 395 / O395).